The chain runs to 146 residues: Large ribosomal subunit protein mL49 (146 aa).

The N-terminal 38 residues, 1–38 (MISSCVTRCFGRGKCLPGPATASIYQTIRCISTNSNKA), are a transit peptide targeting the mitochondrion.

It belongs to the mitochondrion-specific ribosomal protein mL49 family. Component of the mitochondrial large ribosomal subunit (mt-LSU). Mature yeast 74S mitochondrial ribosomes consist of a small (37S) and a large (54S) subunit. The 37S small subunit contains a 15S ribosomal RNA (15S mt-rRNA) and 34 different proteins. The 54S large subunit contains a 21S rRNA (21S mt-rRNA) and 46 different proteins.

The protein localises to the mitochondrion. Its function is as follows. Component of the mitochondrial ribosome (mitoribosome), a dedicated translation machinery responsible for the synthesis of mitochondrial genome-encoded proteins, including at least some of the essential transmembrane subunits of the mitochondrial respiratory chain. The mitoribosomes are attached to the mitochondrial inner membrane and translation products are cotranslationally integrated into the membrane. The protein is Large ribosomal subunit protein mL49 (IMG2) of Saccharomyces cerevisiae (strain ATCC 204508 / S288c) (Baker's yeast).